The chain runs to 400 residues: tRNA(Met) cytidine acetate ligase (400 aa).

ATP contacts are provided by residues 7 to 20 (IVEY…HLYH), Gly101, Asn159, and Arg184.

The protein belongs to the TmcAL family.

Its subcellular location is the cytoplasm. The enzyme catalyses cytidine(34) in elongator tRNA(Met) + acetate + ATP = N(4)-acetylcytidine(34) in elongator tRNA(Met) + AMP + diphosphate. In terms of biological role, catalyzes the formation of N(4)-acetylcytidine (ac(4)C) at the wobble position of elongator tRNA(Met), using acetate and ATP as substrates. First activates an acetate ion to form acetyladenylate (Ac-AMP) and then transfers the acetyl group to tRNA to form ac(4)C34. This is tRNA(Met) cytidine acetate ligase from Caldicellulosiruptor saccharolyticus (strain ATCC 43494 / DSM 8903 / Tp8T 6331).